Reading from the N-terminus, the 81-residue chain is Neuronatin (81 aa).

It belongs to the neuronatin family.

May participate in the maintenance of segment identity in the hindbrain and pituitary development, and maturation or maintenance of the overall structure of the nervous system. May function as a regulatory subunit of ion channels. This Sus scrofa (Pig) protein is Neuronatin (NNAT).